Reading from the N-terminus, the 73-residue chain is Cell division protein ZapB (73 aa).

The stretch at 3 to 66 forms a coiled coil; it reads LELLSQLETK…SWSDKVNGLV (64 aa).

It belongs to the ZapB family. Homodimer. The ends of the coiled-coil dimer bind to each other, forming polymers. Interacts with FtsZ.

The protein localises to the cytoplasm. Its function is as follows. Non-essential, abundant cell division factor that is required for proper Z-ring formation. It is recruited early to the divisome by direct interaction with FtsZ, stimulating Z-ring assembly and thereby promoting cell division earlier in the cell cycle. Its recruitment to the Z-ring requires functional FtsA or ZipA. This is Cell division protein ZapB from Shewanella frigidimarina (strain NCIMB 400).